We begin with the raw amino-acid sequence, 249 residues long: Flagellar brake protein YcgR (249 aa).

The region spanning Gln117–Ser236 is the PilZ domain.

Belongs to the YcgR family. Monomer. Interacts with the flagellar basal bodies.

It is found in the bacterial flagellum basal body. Acts as a flagellar brake, regulating swimming and swarming in a bis-(3'-5') cyclic diguanylic acid (c-di-GMP)-dependent manner. Binds 1 c-di-GMP dimer per subunit. Increasing levels of c-di-GMP lead to decreased motility. The protein is Flagellar brake protein YcgR of Erwinia tasmaniensis (strain DSM 17950 / CFBP 7177 / CIP 109463 / NCPPB 4357 / Et1/99).